A 556-amino-acid polypeptide reads, in one-letter code: Chaperone protein HscC (556 aa).

The protein belongs to the heat shock protein 70 family.

In terms of biological role, probable chaperone. Has ATPase activity. Not stimulated by DnaJ. This Escherichia coli (strain K12) protein is Chaperone protein HscC (hscC).